The sequence spans 481 residues: MKEPLIFDLSRPGRKGYSLSPCDVPEVPLESIIPASLLRKEAVELPEVAENEVVRHFVRLSNLNYHVDKNMYPLGSCTMKYNPKVNDYTCDLSGFSALHPLQPTSTTQGALQLMYELSNMLAEIAGMAGVSLQPAAGAHGELTGILLIKKYHEVRGDKRHKLLVVDSAHGTNPASAALAGYETISVKSNGDGRTDLEDLRSKLDGDVAALMLTNPNTIGLFEKEIVQIAEMVHANGSLLYMDGANMNALLGITRPGDMGFDVMHYNLHKTFAAPHGGGGPGSGPVGVNEKLLPYLPAPLVVKEGDTYRLTSGGDDSIGRMMNFYGNFAVLVRAYTYIRMLGAEGLRRVSENAIINANYLLSKLLERYELPYPKPVMHEFCLSGDKQKKAHGVKTLDIAKRLLDYGFHAPTIYFPLIVSEALMIEPTETESKETLDIFADALLAIAREAEENPDVVKMAPSTTAVKRLDEATASRQLTICCM.

N6-(pyridoxal phosphate)lysine is present on lysine 269.

The protein belongs to the GcvP family. C-terminal subunit subfamily. As to quaternary structure, the glycine cleavage system is composed of four proteins: P, T, L and H. In this organism, the P 'protein' is a heterodimer of two subunits. The cofactor is pyridoxal 5'-phosphate.

It carries out the reaction N(6)-[(R)-lipoyl]-L-lysyl-[glycine-cleavage complex H protein] + glycine + H(+) = N(6)-[(R)-S(8)-aminomethyldihydrolipoyl]-L-lysyl-[glycine-cleavage complex H protein] + CO2. In terms of biological role, the glycine cleavage system catalyzes the degradation of glycine. The P protein binds the alpha-amino group of glycine through its pyridoxal phosphate cofactor; CO(2) is released and the remaining methylamine moiety is then transferred to the lipoamide cofactor of the H protein. In Chlorobium chlorochromatii (strain CaD3), this protein is Probable glycine dehydrogenase (decarboxylating) subunit 2.